The sequence spans 755 residues: Atypical kinase coq-8, mitochondrial (755 aa).

The interval 57–78 (QDVDPLKEPNKTNAPLLSPTLP) is disordered. Polar residues predominate over residues 67–78 (KTNAPLLSPTLP). Residues 435–443 (FACASIGQV) and K457 each bind ATP. The active-site Proton acceptor is the D587.

Belongs to the protein kinase superfamily. ADCK protein kinase family.

The protein localises to the mitochondrion. The protein operates within cofactor biosynthesis; ubiquinone biosynthesis. Functionally, atypical kinase involved in the biosynthesis of coenzyme Q, also named ubiquinone, an essential lipid-soluble electron transporter for aerobic cellular respiration. Its substrate specificity is still unclear: may act as a protein kinase that mediates phosphorylation of coq-3. According to other reports, acts as a small molecule kinase, possibly a lipid kinase that phosphorylates a prenyl lipid in the ubiquinone biosynthesis pathway, as suggested by its ability to bind coenzyme Q lipid intermediates. In Caenorhabditis elegans, this protein is Atypical kinase coq-8, mitochondrial (coq-8).